The primary structure comprises 148 residues: Cytochrome c oxidase subunit 6, mitochondrial (148 aa).

The transit peptide at 1–40 (MLSRAIFRNPVINRTLLRARPGAYHATRLTKNTFIQSRKY) directs the protein to the mitochondrion.

Belongs to the cytochrome c oxidase subunit 5A family. Component of the cytochrome c oxidase (complex IV, CIV), a multisubunit enzyme composed of 12 subunits. The complex is composed of a catalytic core of 3 subunits COX1, COX2 and COX3, encoded in the mitochondrial DNA, and 9 supernumerary subunits COX4, COX5A (or COX5B), COX6, COX7, COX8, COX9, COX12, COX13 and COX26, which are encoded in the nuclear genome. The complex exists as a monomer or a dimer and forms supercomplexes (SCs) in the inner mitochondrial membrane with a dimer of ubiquinol-cytochrome c oxidoreductase (cytochrome b-c1 complex, complex III, CIII), resulting in 2 different assemblies (supercomplexes III(2)IV and III(2)IV(2)). COX26 interacts with COX1, COX2, COX6 and COX9.

The protein resides in the mitochondrion inner membrane. It participates in energy metabolism; oxidative phosphorylation. In terms of biological role, component of the cytochrome c oxidase, the last enzyme in the mitochondrial electron transport chain which drives oxidative phosphorylation. The respiratory chain contains 3 multisubunit complexes succinate dehydrogenase (complex II, CII), ubiquinol-cytochrome c oxidoreductase (cytochrome b-c1 complex, complex III, CIII) and cytochrome c oxidase (complex IV, CIV), that cooperate to transfer electrons derived from NADH and succinate to molecular oxygen, creating an electrochemical gradient over the inner membrane that drives transmembrane transport and the ATP synthase. Cytochrome c oxidase is the component of the respiratory chain that catalyzes the reduction of oxygen to water. Electrons originating from reduced cytochrome c in the intermembrane space (IMS) are transferred via the dinuclear copper A center (CU(A)) of COX2 and heme A of COX1 to the active site in COX1, a binuclear center (BNC) formed by heme A3 and copper B (CU(B)). The BNC reduces molecular oxygen to 2 water molecules using 4 electrons from cytochrome c in the IMS and 4 protons from the mitochondrial matrix. COX6 may stabilize the region of CIV at the interface with CIII, supporting a role in formation or stability of the CIII(2)IV(2) SC. The sequence is that of Cytochrome c oxidase subunit 6, mitochondrial (COX6) from Saccharomyces cerevisiae (strain ATCC 204508 / S288c) (Baker's yeast).